The primary structure comprises 134 residues: Small ribosomal subunit protein uS8c (134 aa).

The protein belongs to the universal ribosomal protein uS8 family. Part of the 30S ribosomal subunit.

Its subcellular location is the plastid. In terms of biological role, one of the primary rRNA binding proteins, it binds directly to 16S rRNA central domain where it helps coordinate assembly of the platform of the 30S subunit. This is Small ribosomal subunit protein uS8c (rps8) from Cuscuta obtusiflora (Peruvian dodder).